The sequence spans 253 residues: Anamorsin homolog (253 aa).

Residues 4–129 form an N-terminal SAM-like domain region; it reads FKGLQKSLYI…ETGSSARLSF (126 aa). A linker region spans residues 130 to 161; sequence AKKNSSTLNVWKISGDDDELIDEEDLLDEVDK. Residues Cys-172, Cys-181, Cys-184, and Cys-186 each contribute to the [2Fe-2S] cluster site. The tract at residues 172 to 186 is fe-S binding site A; it reads CSTTGKRKACKNCSC. [4Fe-4S] cluster is bound by residues Cys-214, Cys-217, Cys-225, and Cys-228. 2 consecutive short sequence motifs (cx2C motif) follow at residues 214–217 and 225–228; these read CGNC and CSSC. A fe-S binding site B region spans residues 214-228; that stretch reads CGNCYLGDAFRCSSC.

Belongs to the anamorsin family. In terms of assembly, monomer. It depends on [2Fe-2S] cluster as a cofactor. The cofactor is [4Fe-4S] cluster.

Its subcellular location is the cytoplasm. The protein resides in the mitochondrion intermembrane space. Functionally, component of the cytosolic iron-sulfur (Fe-S) protein assembly (CIA) machinery. Required for the maturation of extramitochondrial Fe-S proteins. Part of an electron transfer chain functioning in an early step of cytosolic Fe-S biogenesis, facilitating the de novo assembly of a [4Fe-4S] cluster on the cytosolic Fe-S scaffold complex. Electrons are transferred from NADPH via a FAD- and FMN-containing diflavin oxidoreductase. Together with the diflavin oxidoreductase, also required for the assembly of the diferric tyrosyl radical cofactor of ribonucleotide reductase (RNR), probably by providing electrons for reduction during radical cofactor maturation in the catalytic small subunit. This is Anamorsin homolog from Drosophila willistoni (Fruit fly).